A 784-amino-acid chain; its full sequence is Lon protease (784 aa).

Residues 6-207 form the Lon N-terminal domain; sequence LPLMALRDMV…TVITTLTSNI (202 aa). ATP is bound at residue 356–363; the sequence is GPPGVGKT. Positions 592-773 constitute a Lon proteolytic domain; it reads EDQIGSTTGL…DQVLKHALVE (182 aa). Residues S679 and K722 contribute to the active site.

This sequence belongs to the peptidase S16 family. In terms of assembly, homohexamer. Organized in a ring with a central cavity.

It is found in the cytoplasm. The catalysed reaction is Hydrolysis of proteins in presence of ATP.. In terms of biological role, ATP-dependent serine protease that mediates the selective degradation of mutant and abnormal proteins as well as certain short-lived regulatory proteins. Required for cellular homeostasis and for survival from DNA damage and developmental changes induced by stress. Degrades polypeptides processively to yield small peptide fragments that are 5 to 10 amino acids long. Binds to DNA in a double-stranded, site-specific manner. The chain is Lon protease from Rickettsia prowazekii (strain Madrid E).